Consider the following 329-residue polypeptide: Oxidoreductase sirO (329 aa).

Asp-54 is a binding site for NADP(+). The Proton donor role is filled by Tyr-59. Residue His-118 participates in substrate binding. NADP(+)-binding positions include Ser-148–Asn-149, Gln-174, Ser-203–Ala-213, and Ser-288–Ser-296.

This sequence belongs to the aldo/keto reductase family. Aldo/keto reductase 2 subfamily.

It participates in mycotoxin biosynthesis. Functionally, oxidoreductase; part of the gene cluster that mediates the biosynthesis of sirodesmin PL, an epipolythiodioxopiperazine (ETP) characterized by a disulfide bridged cyclic dipeptide and that acts as a phytotoxin which is involved in the blackleg didease of canola. SirD catalyzes the O-prenylation of L-tyrosine (L-Tyr) in the presence of dimethylallyl diphosphate (DMAPP) to yield 4-O-dimethylallyl-L-Tyr, and therefore represents probably the first pathway-specific enzyme in the biosynthesis of sirodesmin PL. 4-O-dimethylallyl-L-Tyr, then undergoes condensation with L-Ser in a reaction catalyzed by the non-ribosomal peptide synthase sirP to form the diketopiperazine (DKP) backbone. Further bishydroxylation of the DKP performed by the cytochrome P450 monooxygenase sirC leads to the production of the intermediate phomamide. This step is essential to form the reactive thiol group required for toxicity of sirodesmin PL. The next steps of sirodesmin biosynthesis are not well understood yet, but some predictions could be made from intermediate compounds identification. Phomamide is converted into phomalizarine via oxidation, probably by sirT. Further oxidation, methylation (by sirM or sirN) and reduction steps convert phomalizarine to deacetyl sirodesmin. Finally, acetyltransferase sirH probably acetylates deacetyl sirodesmin to produce sirodesmin PL. The chain is Oxidoreductase sirO from Leptosphaeria maculans (Blackleg fungus).